The primary structure comprises 419 residues: tRNA(Ile)-lysidine synthase (419 aa).

An ATP-binding site is contributed by 25-30 (SGGIDS).

It belongs to the tRNA(Ile)-lysidine synthase family.

It localises to the cytoplasm. It carries out the reaction cytidine(34) in tRNA(Ile2) + L-lysine + ATP = lysidine(34) in tRNA(Ile2) + AMP + diphosphate + H(+). In terms of biological role, ligates lysine onto the cytidine present at position 34 of the AUA codon-specific tRNA(Ile) that contains the anticodon CAU, in an ATP-dependent manner. Cytidine is converted to lysidine, thus changing the amino acid specificity of the tRNA from methionine to isoleucine. In Actinobacillus pleuropneumoniae serotype 7 (strain AP76), this protein is tRNA(Ile)-lysidine synthase.